A 226-amino-acid chain; its full sequence is RNA pyrophosphohydrolase (226 aa).

Positions 6 to 149 constitute a Nudix hydrolase domain; sequence GFRPNVGIIL…KRGVYEMALT (144 aa). The Nudix box signature appears at 38-59; that stretch reads GGIDRGETPEQAMFRELHEEVG. A disordered region spans residues 197–226; the sequence is MELPPGASFDPDPRTGDGDPGMPGIHKPAG.

Belongs to the Nudix hydrolase family. RppH subfamily. The cofactor is a divalent metal cation.

In terms of biological role, accelerates the degradation of transcripts by removing pyrophosphate from the 5'-end of triphosphorylated RNA, leading to a more labile monophosphorylated state that can stimulate subsequent ribonuclease cleavage. The sequence is that of RNA pyrophosphohydrolase from Paracidovorax citrulli (strain AAC00-1) (Acidovorax citrulli).